Reading from the N-terminus, the 1190-residue chain is ATPase histone chaperone abo1 (1190 aa).

Positions 1-11 (MKEEASEHGGS) are enriched in basic and acidic residues. 2 disordered regions span residues 1–185 (MKEE…RKTH) and 204–253 (YIDS…DLAD). Acidic residues-rich tracts occupy residues 52–62 (QEDEGDEDWEE) and 82–106 (SEGDDEPFEVSESSALEDELSDSED). The segment covering 112-131 (VRSKPKYKPGTRRSTRLRNR) has biased composition (basic residues). The span at 141–152 (EEHRPILRERTS) shows a compositional bias: basic and acidic residues. Residue 309–314 (PGTGKT) coordinates ATP. The Bromo domain occupies 794 to 922 (RLLNKLKIKL…ANVLLGVEDM (129 aa)).

Belongs to the AAA ATPase family. In terms of assembly, homohexamer. Interacts with the FACT complex subunits spt16 and pob3. Interacts with histone H3-H4 (via N-terminus).

It localises to the nucleus. Its subcellular location is the chromosome. The enzyme catalyses ATP + H2O = ADP + phosphate + H(+). Functionally, ATPase histone chaperone which facilitates loading of histone H3-H4 onto DNA in an ATP-dependent manner. Plays a genome-wide role in nucleosome organization and establishment of chromatin. Also plays a role in heterochromatin assembly by stabilizing recruitment of the histone methyltransferase clr4 to methylated histone H3, to promote the transition from H3K9me2 to H3K9me3. The protein is ATPase histone chaperone abo1 of Schizosaccharomyces pombe (strain 972 / ATCC 24843) (Fission yeast).